The chain runs to 325 residues: Peroxidase 47 (325 aa).

The signal sequence occupies residues M1–G36. 4 disulfide bridges follow: C46–C125, C79–C84, C131–C321, and C209–C235. H77 serves as the catalytic Proton acceptor. D78, G83, D85, and S87 together coordinate Ca(2+). P172 is a binding site for substrate. Residue N177 is glycosylated (N-linked (GlcNAc...) asparagine). H202 is a heme b binding site. T203 lines the Ca(2+) pocket. Ca(2+)-binding residues include D246, T248, and D253.

It belongs to the peroxidase family. Classical plant (class III) peroxidase subfamily. Heme b serves as cofactor. Requires Ca(2+) as cofactor.

The protein resides in the secreted. The enzyme catalyses 2 a phenolic donor + H2O2 = 2 a phenolic radical donor + 2 H2O. Functionally, removal of H(2)O(2), oxidation of toxic reductants, biosynthesis and degradation of lignin, suberization, auxin catabolism, response to environmental stresses such as wounding, pathogen attack and oxidative stress. These functions might be dependent on each isozyme/isoform in each plant tissue. This chain is Peroxidase 47 (PER47), found in Arabidopsis thaliana (Mouse-ear cress).